The following is a 240-amino-acid chain: MADVKYKRIMLKLSGEALAGDKGFGINPPVIKTVAEEVKDVYNLGIQIAIVVGGGNMWRGEAGAQMGMERAQADYIGMLATIMNALALQDNLESIGVPTRVQTSIEMRQIAEPYIRRKAIRHLEKERVVIFAGGTGSPYFSTDTTAALRAAEINADAILMAKNGVDGIYSADPKKDPAAVKFDQLTQLDIINKGLNVMDTTASSLSMDNDIPFVVFNLNESGNIRKVVEGENIGTTVRGK.

ATP is bound at residue 12–15 (KLSG). Residues 20–25 (GDKGFG) form an involved in allosteric activation by GTP region. UMP is bound at residue G54. The ATP site is built by G55 and R59. Residues D74 and 135–142 (TGSPYFST) contribute to the UMP site. Positions 163, 169, and 172 each coordinate ATP.

Belongs to the UMP kinase family. In terms of assembly, homohexamer.

The protein resides in the cytoplasm. The catalysed reaction is UMP + ATP = UDP + ADP. It participates in pyrimidine metabolism; CTP biosynthesis via de novo pathway; UDP from UMP (UMPK route): step 1/1. With respect to regulation, allosterically activated by GTP. Inhibited by UTP. Catalyzes the reversible phosphorylation of UMP to UDP. The polypeptide is Uridylate kinase (Levilactobacillus brevis (strain ATCC 367 / BCRC 12310 / CIP 105137 / JCM 1170 / LMG 11437 / NCIMB 947 / NCTC 947) (Lactobacillus brevis)).